Here is a 922-residue protein sequence, read N- to C-terminus: Lysine-specific demethylase 7A (922 aa).

The PHD-type zinc finger occupies 6–57; the sequence is PVYCVCRQPYDVSRFMIECDICKDWFHSSCVKVEEHQAADIDLYHCPNCEVL. Residues 199-355 form the JmjC domain; it reads FSDTKMADLV…MQLRCYEMEK (157 aa). T248 lines the substrate pocket. Positions 251 and 253 each coordinate Fe cation. K268 contributes to the substrate binding site. Residue H323 coordinates Fe cation. 5 disordered regions span residues 445–490, 565–607, 622–711, 754–773, and 872–902; these read EEEG…TKTP, RSLY…TQKP, GSSE…EQEA, GKEHLDSHSHKAANSDHHVK, and LHPTKRPASNPPPISNQATKGKRPKKGMATA. A compositionally biased stretch (basic residues) spans 473–483; that stretch reads HHSGRKARRLR. The segment covering 648–666 has biased composition (acidic residues); it reads ESESSGDDDDEEEEEEEER. 2 stretches are compositionally biased toward basic and acidic residues: residues 667–683 and 691–701; these read QEPIRNLKEEHSGRRLP and PDHDSPQKREC.

This sequence belongs to the JHDM1 histone demethylase family. JHDM1D subfamily. Fe(2+) is required as a cofactor.

The protein localises to the nucleus. Histone demethylase required for brain development. Specifically demethylates dimethylated 'Lys-9' and 'Lys-27' (H3K9me2 and H3K27me2, respectively) of histone H3 and monomethylated histone H4 'Lys-20' residue (H4K20Me1), thereby playing a central role in histone code. This chain is Lysine-specific demethylase 7A (kdm7a), found in Xenopus tropicalis (Western clawed frog).